A 715-amino-acid polypeptide reads, in one-letter code: Bromodomain-containing protein DDB_G0278469 (715 aa).

Disordered stretches follow at residues 18 to 46 (EDNN…NRNA) and 186 to 425 (QQQK…ETKQ). Low complexity-rich tracts occupy residues 20–45 (NNNN…PNRN), 186–204 (QQQK…PTAQ), 215–227 (LTAA…TTTT), 234–254 (TAPP…TTKK), and 261–281 (SKSN…TTIT). Residues 307–316 (KPKEQKKDIM) are compositionally biased toward basic and acidic residues. Residues 322–368 (SKKANTHEEKEEGESEEEEEEEEEEEEEEEEEEEEEQLEDKQKQTKT) adopt a coiled-coil conformation. Positions 332 to 359 (EEGESEEEEEEEEEEEEEEEEEEEEEQL) are enriched in acidic residues. Positions 366-389 (TKTPISQNKSASSNIKPLSKTSKS) are enriched in polar residues. Residues 405–414 (KKITSTTVTR) show a composition bias toward low complexity. Residues 437-470 (KQQTQEEIEQELKLESIRKRIEQFINKFEKEIND) are a coiled coil. The Bromo domain occupies 474-599 (KDLDEGKRKI…IQFYKSLLET (126 aa)). Residues 653–715 (LVDEDEDECL…SEEEDQEATN (63 aa)) are disordered. A compositionally biased stretch (polar residues) spans 662–672 (LNNQNNPTTYD). A compositionally biased stretch (acidic residues) spans 684–715 (QESDEESDEESDEESDEERDQLSEEEDQEATN).

The chain is Bromodomain-containing protein DDB_G0278469 from Dictyostelium discoideum (Social amoeba).